Consider the following 154-residue polypeptide: Lipoprotein signal peptidase (154 aa).

3 consecutive transmembrane segments (helical) span residues 4 to 24 (IIIP…KLWI), 62 to 82 (LFTL…MKHI), and 84 to 104 (GSYW…GNFI). Residues Asp114 and Asp130 contribute to the active site. A helical transmembrane segment spans residues 125 to 145 (IFNVADSYLTIGIICLMIALW).

Belongs to the peptidase A8 family.

It localises to the cell membrane. The enzyme catalyses Release of signal peptides from bacterial membrane prolipoproteins. Hydrolyzes -Xaa-Yaa-Zaa-|-(S,diacylglyceryl)Cys-, in which Xaa is hydrophobic (preferably Leu), and Yaa (Ala or Ser) and Zaa (Gly or Ala) have small, neutral side chains.. Its pathway is protein modification; lipoprotein biosynthesis (signal peptide cleavage). Its function is as follows. This protein specifically catalyzes the removal of signal peptides from prolipoproteins. In Streptococcus agalactiae serotype Ia (strain ATCC 27591 / A909 / CDC SS700), this protein is Lipoprotein signal peptidase.